The chain runs to 61 residues: Small ribosomal subunit protein uS14 (61 aa).

Cys-24, Cys-27, Cys-40, and Cys-43 together coordinate Zn(2+).

It belongs to the universal ribosomal protein uS14 family. Zinc-binding uS14 subfamily. Part of the 30S ribosomal subunit. Contacts proteins S3 and S10. The cofactor is Zn(2+).

Binds 16S rRNA, required for the assembly of 30S particles and may also be responsible for determining the conformation of the 16S rRNA at the A site. This Maridesulfovibrio salexigens (strain ATCC 14822 / DSM 2638 / NCIMB 8403 / VKM B-1763) (Desulfovibrio salexigens) protein is Small ribosomal subunit protein uS14.